A 341-amino-acid polypeptide reads, in one-letter code: N-acetyl-gamma-glutamyl-phosphate reductase (341 aa).

The active site involves Cys145.

Belongs to the NAGSA dehydrogenase family. Type 1 subfamily.

The protein localises to the cytoplasm. It carries out the reaction N-acetyl-L-glutamate 5-semialdehyde + phosphate + NADP(+) = N-acetyl-L-glutamyl 5-phosphate + NADPH + H(+). Its pathway is amino-acid biosynthesis; L-arginine biosynthesis; N(2)-acetyl-L-ornithine from L-glutamate: step 3/4. In terms of biological role, catalyzes the NADPH-dependent reduction of N-acetyl-5-glutamyl phosphate to yield N-acetyl-L-glutamate 5-semialdehyde. The sequence is that of N-acetyl-gamma-glutamyl-phosphate reductase from Streptomyces clavuligerus.